The primary structure comprises 505 residues: ADP-ribosylarginine hydrolase CG2909 (505 aa).

R198, G336, G338, G340, V341, W342, W377, D432, N439, E440, G450, and D451 together coordinate ADP-D-ribose.

It carries out the reaction N(omega)-(ADP-D-ribosyl)-L-arginyl-[protein] + H2O = ADP-D-ribose + L-arginyl-[protein]. The enzyme catalyses N(omega)-(ADP-D-ribosyl)-L-arginine + H2O = ADP-D-ribose + L-arginine. In terms of biological role, protein ADP-ribosyl hydrolase that specifically removes mono-ADP-ribosyl modifications from protein arginine residues. The chain is ADP-ribosylarginine hydrolase CG2909 from Drosophila melanogaster (Fruit fly).